Here is a 379-residue protein sequence, read N- to C-terminus: GTP cyclohydrolase 1 type 2 homolog (379 aa).

A divalent metal cation is bound by residues histidine 64, histidine 65, aspartate 103, histidine 333, and glutamate 337.

Belongs to the GTP cyclohydrolase I type 2/NIF3 family. As to quaternary structure, homohexamer.

The polypeptide is GTP cyclohydrolase 1 type 2 homolog (Mycobacterium bovis (strain ATCC BAA-935 / AF2122/97)).